A 245-amino-acid chain; its full sequence is MSQTEPKDQDPVFQLKGSMLAITVLELSRNDLDSLDRQLAAKVAQAPNFFSNAPLVLALDKLPPSEGAVDLPGLMRVCRQHGLRTLAIRASRIEDIAAAIAIDIPVLPPSGARERPLESAEPVAPKKPEKPPEPTVKPTRVITTPVRGGQQIYAQGGDLVVVSSVSPGAELLADGNIHVYGPMRGRALAGVKGDTKARIFCQQLSAELISIAGHYKVSEDLRRDPMWGSGVQVSLSGDVLNIIRL.

Basic and acidic residues predominate over residues Ala112–Pro132. A disordered region spans residues Ala112–Arg140.

The protein belongs to the MinC family. As to quaternary structure, interacts with MinD and FtsZ.

Functionally, cell division inhibitor that blocks the formation of polar Z ring septums. Rapidly oscillates between the poles of the cell to destabilize FtsZ filaments that have formed before they mature into polar Z rings. Prevents FtsZ polymerization. The sequence is that of Probable septum site-determining protein MinC from Pseudomonas fluorescens (strain Pf0-1).